Consider the following 192-residue polypeptide: Xanthine phosphoribosyltransferase (192 aa).

Residues L20 and N27 each contribute to the xanthine site. Position 128-132 (128-132) interacts with 5-phospho-alpha-D-ribose 1-diphosphate; it reads ANGDA. K156 is a xanthine binding site.

It belongs to the purine/pyrimidine phosphoribosyltransferase family. Xpt subfamily. As to quaternary structure, homodimer.

It is found in the cytoplasm. It catalyses the reaction XMP + diphosphate = xanthine + 5-phospho-alpha-D-ribose 1-diphosphate. It participates in purine metabolism; XMP biosynthesis via salvage pathway; XMP from xanthine: step 1/1. In terms of biological role, converts the preformed base xanthine, a product of nucleic acid breakdown, to xanthosine 5'-monophosphate (XMP), so it can be reused for RNA or DNA synthesis. The sequence is that of Xanthine phosphoribosyltransferase from Staphylococcus aureus (strain MRSA252).